The chain runs to 880 residues: Probable dipeptidyl-aminopeptidase B (880 aa).

A compositionally biased stretch (basic and acidic residues) spans M1–E26. Residues M1–Q71 form a disordered region. Residues M1–R93 lie on the Cytoplasmic side of the membrane. Residues D30 to S40 are compositionally biased toward low complexity. A helical; Signal-anchor for type II membrane protein transmembrane segment spans residues W94 to L114. Residues M115–R880 lie on the Vacuolar side of the membrane. N-linked (GlcNAc...) asparagine glycosylation is present at N533. Residue S724 is the Charge relay system of the active site. The N-linked (GlcNAc...) asparagine glycan is linked to N778. Active-site charge relay system residues include D801 and H834.

It belongs to the peptidase S9B family.

The protein resides in the vacuole membrane. The enzyme catalyses Release of an N-terminal dipeptide, Xaa-Yaa-|-Zaa-, from a polypeptide, preferentially when Yaa is Pro, provided Zaa is neither Pro nor hydroxyproline.. In terms of biological role, type IV dipeptidyl-peptidase which removes N-terminal dipeptides sequentially from polypeptides having unsubstituted N-termini provided that the penultimate residue is proline. The protein is Probable dipeptidyl-aminopeptidase B (dapB) of Pyrenophora tritici-repentis (strain Pt-1C-BFP) (Wheat tan spot fungus).